A 359-amino-acid polypeptide reads, in one-letter code: MASAQRHSTPDLVRQRDPAGVSGLSLGLTSSEFAGLHEGAVPDVTYRELFFPHADPPRRLQNWARSRGVRLRTLTRIGRDQGGRSEKMLFGLHDGYAVESVLIRRFDGHTACISSQVGCAFACRFCASGQAGLMRNLEAGEIVEQVVRLGPKVNRIVFMGIGEPLNNYQQVLKAIRILRDRQGMNFPTTGITLSTIGIPKALKQLREEHLAINLTISLHATTQEVRDRLIPGARKHPLGEVVERACAWARRHNRPVTFAYLVLPGINDSIADARRLAAMLRDSPARVNLMRWNPVDGVGLQRTPDRSLAHFRTTLENALVPVVVRDTQGRDISAACGQLWLRDLKGLPVGNRPRQGRMT.

Residue Glu-99 is the Proton acceptor of the active site. Positions 105–330 (RFDGHTACIS…PVVVRDTQGR (226 aa)) constitute a Radical SAM core domain. Cys-112 and Cys-336 form a disulfide bridge. Positions 119, 123, and 126 each coordinate [4Fe-4S] cluster. S-adenosyl-L-methionine contacts are provided by residues 162 to 163 (GE), Ser-194, 217 to 219 (SLH), and Asn-293. The S-methylcysteine intermediate role is filled by Cys-336.

Belongs to the radical SAM superfamily. RlmN family. Requires [4Fe-4S] cluster as cofactor.

The protein localises to the cytoplasm. This is Probable RNA methyltransferase RPD_2859 from Rhodopseudomonas palustris (strain BisB5).